The primary structure comprises 352 residues: Probable dual-specificity RNA methyltransferase RlmN (352 aa).

Residue Glu-99 is the Proton acceptor of the active site. The Radical SAM core domain occupies 105 to 339; it reads TKSRTTACVS…VTVRRSRGKD (235 aa). Cys-112 and Cys-344 form a disulfide bridge. [4Fe-4S] cluster is bound by residues Cys-119, Cys-123, and Cys-126. Residues 170 to 171, Ser-202, 225 to 227, and Asn-301 contribute to the S-adenosyl-L-methionine site; these read GE and SLH. The active-site S-methylcysteine intermediate is the Cys-344.

It belongs to the radical SAM superfamily. RlmN family. Requires [4Fe-4S] cluster as cofactor.

The protein resides in the cytoplasm. It carries out the reaction adenosine(2503) in 23S rRNA + 2 reduced [2Fe-2S]-[ferredoxin] + 2 S-adenosyl-L-methionine = 2-methyladenosine(2503) in 23S rRNA + 5'-deoxyadenosine + L-methionine + 2 oxidized [2Fe-2S]-[ferredoxin] + S-adenosyl-L-homocysteine. The enzyme catalyses adenosine(37) in tRNA + 2 reduced [2Fe-2S]-[ferredoxin] + 2 S-adenosyl-L-methionine = 2-methyladenosine(37) in tRNA + 5'-deoxyadenosine + L-methionine + 2 oxidized [2Fe-2S]-[ferredoxin] + S-adenosyl-L-homocysteine. Specifically methylates position 2 of adenine 2503 in 23S rRNA and position 2 of adenine 37 in tRNAs. The polypeptide is Probable dual-specificity RNA methyltransferase RlmN (Christiangramia forsetii (strain DSM 17595 / CGMCC 1.15422 / KT0803) (Gramella forsetii)).